Consider the following 92-residue polypeptide: Putative regulatory protein CA_C1717 (92 aa).

The protein belongs to the RemA family.

The protein is Putative regulatory protein CA_C1717 of Clostridium acetobutylicum (strain ATCC 824 / DSM 792 / JCM 1419 / IAM 19013 / LMG 5710 / NBRC 13948 / NRRL B-527 / VKM B-1787 / 2291 / W).